Reading from the N-terminus, the 543-residue chain is Serine/threonine-protein kinase PkaA (543 aa).

A Protein kinase domain is found at 8–276; that stretch reads YLLEEPLGRG…ENLARGLRVV (269 aa). Residues 14 to 22 and lysine 48 contribute to the ATP site; that span reads LGRGATGTV. Aspartate 142 acts as the Proton acceptor in catalysis. The disordered stretch occupies residues 303-480; it reads PAPAQVPGAP…RQRSANPMRI (178 aa). Over residues 352–361 the composition is skewed to pro residues; sequence VMPPVPPGQP. Composition is skewed to low complexity over residues 407 to 420 and 428 to 451; these read RQVS…RQAP and PGYG…QPQR. Over residues 452-461 the composition is skewed to pro residues; it reads YAPPPAPEPQ.

It belongs to the protein kinase superfamily. Ser/Thr protein kinase family. Autophosphorylated mainly at Thr and slightly at Ser.

It catalyses the reaction L-seryl-[protein] + ATP = O-phospho-L-seryl-[protein] + ADP + H(+). The enzyme catalyses L-threonyl-[protein] + ATP = O-phospho-L-threonyl-[protein] + ADP + H(+). The protein is Serine/threonine-protein kinase PkaA (pkaA) of Streptomyces coelicolor (strain ATCC BAA-471 / A3(2) / M145).